We begin with the raw amino-acid sequence, 241 residues long: Purine nucleoside phosphorylase DeoD-type 1 (241 aa).

Residue His-5 coordinates a purine D-ribonucleoside. Phosphate contacts are provided by residues Gly-21, Arg-25, Arg-44, and 88-91 (RVGS). A purine D-ribonucleoside contacts are provided by residues 180–182 (EME) and 204–205 (SD). The active-site Proton donor is the Asp-205.

The protein belongs to the PNP/UDP phosphorylase family. As to quaternary structure, homohexamer; trimer of homodimers.

The enzyme catalyses a purine D-ribonucleoside + phosphate = a purine nucleobase + alpha-D-ribose 1-phosphate. The catalysed reaction is a purine 2'-deoxy-D-ribonucleoside + phosphate = a purine nucleobase + 2-deoxy-alpha-D-ribose 1-phosphate. Functionally, catalyzes the reversible phosphorolytic breakdown of the N-glycosidic bond in the beta-(deoxy)ribonucleoside molecules, with the formation of the corresponding free purine bases and pentose-1-phosphate. The chain is Purine nucleoside phosphorylase DeoD-type 1 from Vibrio cholerae serotype O1 (strain ATCC 39315 / El Tor Inaba N16961).